A 150-amino-acid chain; its full sequence is SsrA-binding protein (150 aa).

Belongs to the SmpB family.

Its subcellular location is the cytoplasm. Functionally, required for rescue of stalled ribosomes mediated by trans-translation. Binds to transfer-messenger RNA (tmRNA), required for stable association of tmRNA with ribosomes. tmRNA and SmpB together mimic tRNA shape, replacing the anticodon stem-loop with SmpB. tmRNA is encoded by the ssrA gene; the 2 termini fold to resemble tRNA(Ala) and it encodes a 'tag peptide', a short internal open reading frame. During trans-translation Ala-aminoacylated tmRNA acts like a tRNA, entering the A-site of stalled ribosomes, displacing the stalled mRNA. The ribosome then switches to translate the ORF on the tmRNA; the nascent peptide is terminated with the 'tag peptide' encoded by the tmRNA and targeted for degradation. The ribosome is freed to recommence translation, which seems to be the essential function of trans-translation. This Flavobacterium psychrophilum (strain ATCC 49511 / DSM 21280 / CIP 103535 / JIP02/86) protein is SsrA-binding protein.